The sequence spans 609 residues: Grainyhead-like protein 1 homolog (609 aa).

Positions 1–91 (MTQDYDNKRP…EHDHADHEHS (91 aa)) are transcription activation. Positions 183 to 207 (SDHFTSNNQPPNSQRRTPDSTFSET) are disordered. A compositionally biased stretch (polar residues) spans 185–206 (HFTSNNQPPNSQRRTPDSTFSE). The region spanning 239–465 (AGNNFEYTLE…DLDTQPVLFI (227 aa)) is the Grh/CP2 DB domain. Interaction with DNA regions lie at residues 371–380 (TDFSSQKGVK) and 418–421 (RKIR).

The protein belongs to the grh/CP2 family. Grainyhead subfamily. Binds DNA as homodimer.

It is found in the nucleus. Its function is as follows. Transcription factor involved in epithelial development. Binds directly to the consensus DNA sequence 5'-AACCGGTT-3' and modulates expression of epidermal-specific genes, including XK81A1. Important regulator of DSG1 in the context of epidermal differentiation. Regulates the maintenance of skin barrier. No genetic interaction with GRHL3, nor functional cooperativity due to diverse target gene selectivity during epithelia development. Functions downstream of BMP-signaling cascade modulating endogenous bmp4-responsive targets. In Xenopus laevis (African clawed frog), this protein is Grainyhead-like protein 1 homolog.